Consider the following 163-residue polypeptide: Glutathione peroxidase 2 (163 aa).

Residue Cys-36 is part of the active site.

It belongs to the glutathione peroxidase family.

The protein localises to the cytoplasm. The enzyme catalyses 2 glutathione + H2O2 = glutathione disulfide + 2 H2O. Functionally, may constitute a glutathione peroxidase-like protective system against oxidative stresses. This is Glutathione peroxidase 2 (gpx-2) from Caenorhabditis elegans.